We begin with the raw amino-acid sequence, 371 residues long: Anhydro-N-acetylmuramic acid kinase (371 aa).

Residue 12-20 participates in ATP binding; it reads GTVLDGNID.

The protein belongs to the anhydro-N-acetylmuramic acid kinase family.

It catalyses the reaction 1,6-anhydro-N-acetyl-beta-muramate + ATP + H2O = N-acetyl-D-muramate 6-phosphate + ADP + H(+). It participates in amino-sugar metabolism; 1,6-anhydro-N-acetylmuramate degradation. It functions in the pathway cell wall biogenesis; peptidoglycan recycling. Catalyzes the specific phosphorylation of 1,6-anhydro-N-acetylmuramic acid (anhMurNAc) with the simultaneous cleavage of the 1,6-anhydro ring, generating MurNAc-6-P. Is required for the utilization of anhMurNAc either imported from the medium or derived from its own cell wall murein, and thus plays a role in cell wall recycling. This chain is Anhydro-N-acetylmuramic acid kinase, found in Rhizobium rhizogenes (strain K84 / ATCC BAA-868) (Agrobacterium radiobacter).